Reading from the N-terminus, the 277-residue chain is Diaminopimelate epimerase (277 aa).

Positions 13, 46, and 66 each coordinate substrate. Residue Cys-75 is the Proton donor of the active site. Substrate-binding positions include 76 to 77 (GN), Asn-160, Asn-193, and 211 to 212 (ER). The active-site Proton acceptor is the Cys-220. Residue 221–222 (GS) coordinates substrate.

Belongs to the diaminopimelate epimerase family. In terms of assembly, homodimer.

The protein resides in the cytoplasm. The catalysed reaction is (2S,6S)-2,6-diaminopimelate = meso-2,6-diaminopimelate. It participates in amino-acid biosynthesis; L-lysine biosynthesis via DAP pathway; DL-2,6-diaminopimelate from LL-2,6-diaminopimelate: step 1/1. Catalyzes the stereoinversion of LL-2,6-diaminopimelate (L,L-DAP) to meso-diaminopimelate (meso-DAP), a precursor of L-lysine and an essential component of the bacterial peptidoglycan. This chain is Diaminopimelate epimerase, found in Legionella pneumophila (strain Corby).